The sequence spans 580 residues: 9,13-epoxylabda-14-ene synthase, chloroplastic (580 aa).

Residues 1–32 (MSITFNLKIAPFSGPGIQRSKETFPATEIQIT) constitute a chloroplast transit peptide. Mg(2+) is bound by residues D322, D326, N466, T470, and E474. The short motif at 322–326 (DDFFD) is the DDXXD motif element.

This sequence belongs to the terpene synthase family. Mg(2+) is required as a cofactor. Present in both leaves and flowers, with higher levels in leaves.

The protein resides in the plastid. The protein localises to the chloroplast. It catalyses the reaction peregrinol diphosphate = (13R)-9,13-epoxylabd-14-ene + diphosphate. It carries out the reaction (+)-copalyl diphosphate = miltiradiene + diphosphate. The catalysed reaction is 8-hydroxycopalyl diphosphate = (13R)-manoyl oxide + diphosphate. It participates in secondary metabolite biosynthesis; terpenoid biosynthesis. Functionally, involved in the biosynthesis of labdane-type diterpenoid including marrubiin and other labdane-related furanoid diterpenoids with potential applications as anti-diabetics, analgesics or vasorelaxants. Terpene synthase the catalyzes the conversion of peregrinol diphosphate to 9,13(R)-epoxy-labd-14-ene, from (+)-copalyl diphosphate ((+)-CPP) to miltiradiene and from 8-hydroxycopalyl diphosphate (LPP, labda-13-en-8-ol diphosphate) to manoyl oxide. The sequence is that of 9,13-epoxylabda-14-ene synthase, chloroplastic from Marrubium vulgare (White horehound).